Consider the following 313-residue polypeptide: Protein FixB (313 aa).

FAD is bound at residue 255-283 (LYLAVGISGQIQHMVGANASQTIFAINKD).

Belongs to the ETF alpha-subunit/FixB family. Heterodimer of FixA and FixB.

Its pathway is amine and polyamine metabolism; carnitine metabolism. In terms of biological role, required for anaerobic carnitine reduction. May bring reductant to CaiA. The chain is Protein FixB from Escherichia coli O7:K1 (strain IAI39 / ExPEC).